A 628-amino-acid polypeptide reads, in one-letter code: Probable potassium transport system protein Kup (628 aa).

A run of 12 helical transmembrane segments spans residues 20–40 (ALLT…SPLY), 63–83 (IISM…VMLV), 110–130 (FVAV…VITP), 151–171 (FILP…PLGT), 178–198 (FGPI…PQII), 212–232 (ALGL…AVVL), 256–276 (WFCV…ALVI), 296–316 (IPLV…VISG), 346–366 (IYMP…VLVF), 375–395 (AYGL…LIYV), 398–418 (TWWK…LLFA), and 422–442 (TKIH…IVVM).

This sequence belongs to the HAK/KUP transporter (TC 2.A.72) family.

The protein localises to the cell membrane. The catalysed reaction is K(+)(in) + H(+)(in) = K(+)(out) + H(+)(out). In terms of biological role, transport of potassium into the cell. Likely operates as a K(+):H(+) symporter. In Corynebacterium glutamicum (strain R), this protein is Probable potassium transport system protein Kup.